A 61-amino-acid chain; its full sequence is Small ribosomal subunit protein uS14 (61 aa).

Positions 24, 27, 40, and 43 each coordinate Zn(2+).

Belongs to the universal ribosomal protein uS14 family. Zinc-binding uS14 subfamily. In terms of assembly, part of the 30S ribosomal subunit. Contacts proteins S3 and S10. It depends on Zn(2+) as a cofactor.

Its function is as follows. Binds 16S rRNA, required for the assembly of 30S particles and may also be responsible for determining the conformation of the 16S rRNA at the A site. In Petrotoga mobilis (strain DSM 10674 / SJ95), this protein is Small ribosomal subunit protein uS14.